The sequence spans 359 residues: Stearoyl-CoA desaturase (359 aa).

The Cytoplasmic portion of the chain corresponds to 1 to 72 (MPAHLLQDDI…EGPSPKVEYV (72 aa)). The chain crosses the membrane as a helical span at residues 73-93 (WRNIILMSLLHLGALYGITLI). Asparagine 75 is a binding site for substrate. Over 94–97 (PTCK) the chain is Lumenal. The chain crosses the membrane as a helical span at residues 98 to 118 (FYTWLWGVFYYFVSALGITAG). At 119 to 217 (AHRLWSHRSY…EKLVMFQRRY (99 aa)) the chain is on the cytoplasmic side. 2 residues coordinate Fe cation: histidine 120 and histidine 125. Positions 120–125 (HRLWSH) match the Histidine box-1 motif. The substrate site is built by asparagine 148, arginine 155, and aspartate 156. Fe cation-binding residues include histidine 157, histidine 160, and histidine 161. The Histidine box-2 motif lies at 157 to 161 (HRAHH). Substrate is bound by residues arginine 188 and lysine 189. Residues serine 198 and serine 203 each carry the phosphoserine modification. A helical membrane pass occupies residues 218–237 (YKPGLLMMCFILPTLVPWYF). Residues 238–241 (WGET) lie on the Lumenal side of the membrane. Residues 242-263 (FQNSVFVATFLRYAVVLNATWL) traverse the membrane as a helical segment. Residue tryptophan 262 participates in substrate binding. Residues 264-359 (VNSAAHLFGY…RTGDGNYKSG (96 aa)) are Cytoplasmic-facing. 4 residues coordinate Fe cation: histidine 269, histidine 298, histidine 301, and histidine 302. The Histidine box-3 motif lies at 298-302 (HNYHH).

It belongs to the fatty acid desaturase type 1 family. May self-associate and form homodimers. Requires Fe(2+) as cofactor. In terms of tissue distribution, detected in fetal liver, lung and brain. Highly expressed in adult adipose tissue, and at lower levels in adult brain and lung.

The protein localises to the endoplasmic reticulum membrane. The catalysed reaction is octadecanoyl-CoA + 2 Fe(II)-[cytochrome b5] + O2 + 2 H(+) = (9Z)-octadecenoyl-CoA + 2 Fe(III)-[cytochrome b5] + 2 H2O. The enzyme catalyses hexadecanoyl-CoA + 2 Fe(II)-[cytochrome b5] + O2 + 2 H(+) = (9Z)-hexadecenoyl-CoA + 2 Fe(III)-[cytochrome b5] + 2 H2O. In terms of biological role, stearoyl-CoA desaturase that utilizes O(2) and electrons from reduced cytochrome b5 to introduce the first double bond into saturated fatty acyl-CoA substrates. Catalyzes the insertion of a cis double bond at the delta-9 position into fatty acyl-CoA substrates including palmitoyl-CoA and stearoyl-CoA. Gives rise to a mixture of 16:1 and 18:1 unsaturated fatty acids. Plays an important role in lipid biosynthesis. Plays an important role in regulating the expression of genes that are involved in lipogenesis and in regulating mitochondrial fatty acid oxidation. Plays an important role in body energy homeostasis. Contributes to the biosynthesis of membrane phospholipids, cholesterol esters and triglycerides. The protein is Stearoyl-CoA desaturase (SCD) of Homo sapiens (Human).